We begin with the raw amino-acid sequence, 226 residues long: Enolase-phosphatase E1 (226 aa).

The protein belongs to the HAD-like hydrolase superfamily. MasA/MtnC family. Monomer. The cofactor is Mg(2+).

The catalysed reaction is 5-methylsulfanyl-2,3-dioxopentyl phosphate + H2O = 1,2-dihydroxy-5-(methylsulfanyl)pent-1-en-3-one + phosphate. It participates in amino-acid biosynthesis; L-methionine biosynthesis via salvage pathway; L-methionine from S-methyl-5-thio-alpha-D-ribose 1-phosphate: step 3/6. Its pathway is amino-acid biosynthesis; L-methionine biosynthesis via salvage pathway; L-methionine from S-methyl-5-thio-alpha-D-ribose 1-phosphate: step 4/6. In terms of biological role, bifunctional enzyme that catalyzes the enolization of 2,3-diketo-5-methylthiopentyl-1-phosphate (DK-MTP-1-P) into the intermediate 2-hydroxy-3-keto-5-methylthiopentenyl-1-phosphate (HK-MTPenyl-1-P), which is then dephosphorylated to form the acireductone 1,2-dihydroxy-3-keto-5-methylthiopentene (DHK-MTPene). The protein is Enolase-phosphatase E1 of Shewanella sp. (strain MR-4).